We begin with the raw amino-acid sequence, 462 residues long: Glycine--tRNA ligase (462 aa).

The substrate site is built by arginine 98 and glutamate 174. ATP-binding positions include 206 to 208 (RNE), 216 to 221 (FRTREF), 290 to 291 (EL), and 334 to 337 (GADR). 221–225 (FEQME) is a binding site for substrate. 330–334 (EPSLG) is a substrate binding site.

This sequence belongs to the class-II aminoacyl-tRNA synthetase family. Homodimer.

The protein resides in the cytoplasm. It carries out the reaction tRNA(Gly) + glycine + ATP = glycyl-tRNA(Gly) + AMP + diphosphate. In terms of biological role, catalyzes the attachment of glycine to tRNA(Gly). In Lachnospira eligens (strain ATCC 27750 / DSM 3376 / VPI C15-48 / C15-B4) (Eubacterium eligens), this protein is Glycine--tRNA ligase.